A 553-amino-acid chain; its full sequence is Non-SCF-type F-box protein ROY1 (553 aa).

Residues 3-49 form the F-box domain; that stretch reads FQDQDIFIVFSHASLFLNQNDLLSLSLTSKKMHDMIAIPRLYSNIHI.

As to quaternary structure, interacts with SKP1 and YPT32; SKP1 is required for the interaction with YPT32.

The protein localises to the cytoplasm. It localises to the nucleus. Its subcellular location is the cytoplasmic vesicle membrane. Its function is as follows. Non-SCF-type F-box protein involved in the endocytic with the vacuolar sorting pathway. Acts as a repressor of YPT52 by inhibiting the formation of active, GTP-bound, YPT52. Involved in the defense mechanism against methylmercury toxicity. The sequence is that of Non-SCF-type F-box protein ROY1 (ROY1) from Saccharomyces cerevisiae (strain ATCC 204508 / S288c) (Baker's yeast).